Reading from the N-terminus, the 557-residue chain is TGF-beta receptor type-2 (557 aa).

Residues 1 to 23 (MPPRLRPLLLRVSLWVLVGSSSP) form the signal peptide. Topologically, residues 24-155 (ALLHDRSKEN…KPEEKDEISK (132 aa)) are extracellular. Cystine bridges form between Cys41–Cys74, Cys44–Cys61, Cys51–Cys57, Cys67–Cys91, Cys111–Cys126, and Cys128–Cys133. Asn62 and Asn84 each carry an N-linked (GlcNAc...) asparagine glycan. A helical transmembrane segment spans residues 156 to 176 (VTIISLVPLLVISVAVIVIFY). Over 177 to 557 (AYRTHKKRKL…PEDGSVTTAK (381 aa)) the chain is Cytoplasmic. The Protein kinase domain occupies 234–537 (IELDIVVGKG…FSEFKHHDKL (304 aa)). Residues 240–248 (VGKGRFAEV) and Lys267 each bind ATP. The active-site Proton acceptor is Asp369.

Belongs to the protein kinase superfamily. TKL Ser/Thr protein kinase family. TGFB receptor subfamily. In terms of assembly, heterohexamer; TGFB1, TGFB2 and TGFB3 homodimeric ligands assemble a functional receptor composed of two TGFBR1 and TGFBR2 heterodimers to form a ligand-receptor heterohexamer. Mg(2+) serves as cofactor. It depends on Mn(2+) as a cofactor. Post-translationally, phosphorylated on a Ser/Thr residue in the cytoplasmic domain. Detected at low levels in embryonic heart, brain and lung. Detected at high levels in hatchling heart and lung.

It localises to the cell membrane. The protein localises to the membrane raft. It catalyses the reaction L-threonyl-[receptor-protein] + ATP = O-phospho-L-threonyl-[receptor-protein] + ADP + H(+). It carries out the reaction L-seryl-[receptor-protein] + ATP = O-phospho-L-seryl-[receptor-protein] + ADP + H(+). Functionally, transmembrane serine/threonine kinase forming with the TGF-beta type I serine/threonine kinase receptor, TGFBR1, the non-promiscuous receptor for the TGF-beta cytokines TGFB1, TGFB2 and TGFB3. Transduces the TGFB1, TGFB2 and TGFB3 signal from the cell surface to the cytoplasm and is thus regulating a plethora of physiological and pathological processes including cell cycle arrest in epithelial and hematopoietic cells, control of mesenchymal cell proliferation and differentiation, wound healing, extracellular matrix production, immunosuppression and carcinogenesis. The formation of the receptor complex composed of 2 TGFBR1 and 2 TGFBR2 molecules symmetrically bound to the cytokine dimer results in the phosphorylation and the activation of TGFRB1 by the constitutively active TGFBR2. Activated TGFBR1 phosphorylates SMAD2 which dissociates from the receptor and interacts with SMAD4. The SMAD2-SMAD4 complex is subsequently translocated to the nucleus where it modulates the transcription of the TGF-beta-regulated genes. This constitutes the canonical SMAD-dependent TGF-beta signaling cascade. Also involved in non-canonical, SMAD-independent TGF-beta signaling pathways. This Gallus gallus (Chicken) protein is TGF-beta receptor type-2 (TGFBR2).